A 462-amino-acid chain; its full sequence is Cysteine--tRNA ligase (462 aa).

Cysteine 24 is a binding site for Zn(2+). The short motif at 26 to 36 (PTVYDDAHLGH) is the 'HIGH' region element. Zn(2+)-binding residues include cysteine 199, histidine 224, and glutamate 228. The 'KMSKS' region motif lies at 256 to 260 (KMSKS). Lysine 259 provides a ligand contact to ATP.

The protein belongs to the class-I aminoacyl-tRNA synthetase family. Monomer. Zn(2+) serves as cofactor.

Its subcellular location is the cytoplasm. The enzyme catalyses tRNA(Cys) + L-cysteine + ATP = L-cysteinyl-tRNA(Cys) + AMP + diphosphate. This chain is Cysteine--tRNA ligase, found in Campylobacter jejuni subsp. jejuni serotype O:23/36 (strain 81-176).